The sequence spans 305 residues: tRNA dimethylallyltransferase (305 aa).

9 to 16 (GPTGAGKT) lines the ATP pocket. Residue 11–16 (TGAGKT) coordinates substrate. 2 interaction with substrate tRNA regions span residues 34–37 (DSRQ) and 158–162 (QRIVR).

It belongs to the IPP transferase family. In terms of assembly, monomer. The cofactor is Mg(2+).

It carries out the reaction adenosine(37) in tRNA + dimethylallyl diphosphate = N(6)-dimethylallyladenosine(37) in tRNA + diphosphate. In terms of biological role, catalyzes the transfer of a dimethylallyl group onto the adenine at position 37 in tRNAs that read codons beginning with uridine, leading to the formation of N6-(dimethylallyl)adenosine (i(6)A). In Oleidesulfovibrio alaskensis (strain ATCC BAA-1058 / DSM 17464 / G20) (Desulfovibrio alaskensis), this protein is tRNA dimethylallyltransferase.